Reading from the N-terminus, the 1028-residue chain is Formin-like protein 3 (1028 aa).

A lipid anchor (N-myristoyl glycine) is attached at Gly-2. In terms of domain architecture, GBD/FH3 spans Met-26 to Glu-472. Phosphothreonine is present on Thr-95. Ser-174 bears the Phosphoserine mark. Positions Glu-493 to Pro-541 are disordered. Pro residues predominate over residues Pro-508–Pro-541. The FH2 domain occupies Ile-561–Ala-951. The 33-residue stretch at Tyr-986–Cys-1018 folds into the DAD domain. Ser-1014 bears the Phosphoserine mark.

The protein belongs to the formin homology family. In terms of assembly, interacts with SRGAP2 (via SH3 domain). Expressed in endothelial cells.

It is found in the cytoplasm. The protein resides in the cell membrane. In terms of biological role, plays a role in the regulation of cell morphology and cytoskeletal organization. Required in the control of cell shape and migration. Required for developmental angiogenesis. In this process, required for microtubule reorganization and for efficient endothelial cell elongation. In quiescent endothelial cells, triggers rearrangement of the actin cytoskeleton, but does not alter microtubule alignement. In Homo sapiens (Human), this protein is Formin-like protein 3 (FMNL3).